The primary structure comprises 221 residues: Glutathione peroxidase 6 (221 aa).

The first 19 residues, 1 to 19 (MTQQFWGPCLFSLFMAVLA), serve as a signal peptide directing secretion. Residue cysteine 73 is part of the active site.

The protein belongs to the glutathione peroxidase family. In terms of tissue distribution, expressed in the Bowman glands.

The protein localises to the secreted. It carries out the reaction 2 glutathione + H2O2 = glutathione disulfide + 2 H2O. This chain is Glutathione peroxidase 6 (Gpx6), found in Rattus norvegicus (Rat).